A 119-amino-acid chain; its full sequence is Large ribosomal subunit protein bL20 (119 aa).

The protein belongs to the bacterial ribosomal protein bL20 family.

In terms of biological role, binds directly to 23S ribosomal RNA and is necessary for the in vitro assembly process of the 50S ribosomal subunit. It is not involved in the protein synthesizing functions of that subunit. This is Large ribosomal subunit protein bL20 from Alkalilimnicola ehrlichii (strain ATCC BAA-1101 / DSM 17681 / MLHE-1).